Here is a 349-residue protein sequence, read N- to C-terminus: Single-stranded TG1-3 DNA-binding protein (349 aa).

One can recognise an RRM 1 domain in the interval Phe-45–Pro-127. 2 disordered regions span residues Val-121–Ile-208 and Glu-298–Ala-349. Ser-152 carries the post-translational modification Phosphoserine. A compositionally biased stretch (polar residues) spans Ala-168–Ala-179. Residues Gly-181 to Gly-191 show a composition bias toward basic and acidic residues. Positions Asn-206–Phe-296 constitute an RRM 2 domain. 2 stretches are compositionally biased toward basic and acidic residues: residues Glu-298–Asn-310 and Thr-327–Ser-340.

Its subcellular location is the cytoplasm. The protein localises to the nucleus. It localises to the chromosome. The protein resides in the telomere. Functionally, binds single-stranded telomeric sequences of the type (TG[1-3])n in vitro. Has a role in meiosis. The protein is Single-stranded TG1-3 DNA-binding protein (tcg1) of Schizosaccharomyces pombe (strain 972 / ATCC 24843) (Fission yeast).